The chain runs to 207 residues: Putative transcriptional regulator (207 aa).

Residues Lys3–Leu118 enclose the Response regulatory domain. A 4-aspartylphosphate mark is found at Asp9 and Asp53. The 66-residue stretch at Glu140–Glu205 folds into the HTH luxR-type domain. Positions Leu155 to Ser174 form a DNA-binding region, H-T-H motif.

Its function is as follows. Probable transcriptional regulator. The polypeptide is Putative transcriptional regulator (Pseudomonas aeruginosa (strain ATCC 15692 / DSM 22644 / CIP 104116 / JCM 14847 / LMG 12228 / 1C / PRS 101 / PAO1)).